We begin with the raw amino-acid sequence, 346 residues long: Phosphoribosylformylglycinamidine cyclo-ligase (346 aa).

The protein belongs to the AIR synthase family.

Its subcellular location is the cytoplasm. The enzyme catalyses 2-formamido-N(1)-(5-O-phospho-beta-D-ribosyl)acetamidine + ATP = 5-amino-1-(5-phospho-beta-D-ribosyl)imidazole + ADP + phosphate + H(+). It participates in purine metabolism; IMP biosynthesis via de novo pathway; 5-amino-1-(5-phospho-D-ribosyl)imidazole from N(2)-formyl-N(1)-(5-phospho-D-ribosyl)glycinamide: step 2/2. The polypeptide is Phosphoribosylformylglycinamidine cyclo-ligase (Proteus mirabilis (strain HI4320)).